Here is a 55-residue protein sequence, read N- to C-terminus: Large ribosomal subunit protein bL33B (55 aa).

Belongs to the bacterial ribosomal protein bL33 family.

This Rhodococcus jostii (strain RHA1) protein is Large ribosomal subunit protein bL33B.